The primary structure comprises 183 residues: Dual-action ribosomal maturation protein DarP (183 aa).

Belongs to the DarP family.

The protein localises to the cytoplasm. Functionally, member of a network of 50S ribosomal subunit biogenesis factors which assembles along the 30S-50S interface, preventing incorrect 23S rRNA structures from forming. Promotes peptidyl transferase center (PTC) maturation. In Escherichia coli O6:H1 (strain CFT073 / ATCC 700928 / UPEC), this protein is Dual-action ribosomal maturation protein DarP.